A 94-amino-acid polypeptide reads, in one-letter code: Integration host factor subunit beta (94 aa).

This sequence belongs to the bacterial histone-like protein family. Heterodimer of an alpha and a beta chain.

Its function is as follows. This protein is one of the two subunits of integration host factor, a specific DNA-binding protein that functions in genetic recombination as well as in transcriptional and translational control. The protein is Integration host factor subunit beta of Yersinia enterocolitica serotype O:8 / biotype 1B (strain NCTC 13174 / 8081).